Consider the following 360-residue polypeptide: Peptide chain release factor 1 (360 aa).

Glutamine 236 bears the N5-methylglutamine mark.

Belongs to the prokaryotic/mitochondrial release factor family. In terms of processing, methylated by PrmC. Methylation increases the termination efficiency of RF1.

Its subcellular location is the cytoplasm. Peptide chain release factor 1 directs the termination of translation in response to the peptide chain termination codons UAG and UAA. This is Peptide chain release factor 1 from Limosilactobacillus fermentum (strain NBRC 3956 / LMG 18251) (Lactobacillus fermentum).